We begin with the raw amino-acid sequence, 531 residues long: T-complex protein 1 subunit zeta-2 (531 aa).

The protein belongs to the TCP-1 chaperonin family. As to quaternary structure, component of the chaperonin-containing T-complex (TRiC), a heterooligomeric complex of about 850 to 900 kDa that forms two stacked rings, 12 to 16 nm in diameter. In terms of tissue distribution, testis specific.

Its subcellular location is the cytoplasm. Its function is as follows. Component of the chaperonin-containing T-complex (TRiC), a molecular chaperone complex that assists the folding of proteins upon ATP hydrolysis. The chain is T-complex protein 1 subunit zeta-2 (Cct6b) from Mus musculus (Mouse).